The chain runs to 20 residues: Alkaline phosphatase (20 aa).

As to expression, expressed by the venom gland.

It localises to the secreted. It carries out the reaction a phosphate monoester + H2O = an alcohol + phosphate. Its function is as follows. Has hemorrhagic activity. This Deinagkistrodon acutus (Hundred-pace snake) protein is Alkaline phosphatase.